We begin with the raw amino-acid sequence, 281 residues long: Ribosomal RNA small subunit methyltransferase A (281 aa).

6 residues coordinate S-adenosyl-L-methionine: Asn-18, Leu-20, Gly-45, Glu-66, Asp-91, and Asn-118.

The protein belongs to the class I-like SAM-binding methyltransferase superfamily. rRNA adenine N(6)-methyltransferase family. RsmA subfamily.

It is found in the cytoplasm. It catalyses the reaction adenosine(1518)/adenosine(1519) in 16S rRNA + 4 S-adenosyl-L-methionine = N(6)-dimethyladenosine(1518)/N(6)-dimethyladenosine(1519) in 16S rRNA + 4 S-adenosyl-L-homocysteine + 4 H(+). Its function is as follows. Specifically dimethylates two adjacent adenosines (A1518 and A1519) in the loop of a conserved hairpin near the 3'-end of 16S rRNA in the 30S particle. May play a critical role in biogenesis of 30S subunits. The chain is Ribosomal RNA small subunit methyltransferase A from Histophilus somni (strain 129Pt) (Haemophilus somnus).